A 618-amino-acid chain; its full sequence is Dihydroxy-acid dehydratase (618 aa).

Asp81 is a binding site for Mg(2+). Residue Cys122 participates in [2Fe-2S] cluster binding. 2 residues coordinate Mg(2+): Asp123 and Lys124. Lys124 is subject to N6-carboxylysine. Cys195 contributes to the [2Fe-2S] cluster binding site. Mg(2+) is bound at residue Glu493. Residue Ser519 is the Proton acceptor of the active site.

It belongs to the IlvD/Edd family. In terms of assembly, homodimer. [2Fe-2S] cluster serves as cofactor. Requires Mg(2+) as cofactor.

The catalysed reaction is (2R)-2,3-dihydroxy-3-methylbutanoate = 3-methyl-2-oxobutanoate + H2O. It carries out the reaction (2R,3R)-2,3-dihydroxy-3-methylpentanoate = (S)-3-methyl-2-oxopentanoate + H2O. Its pathway is amino-acid biosynthesis; L-isoleucine biosynthesis; L-isoleucine from 2-oxobutanoate: step 3/4. The protein operates within amino-acid biosynthesis; L-valine biosynthesis; L-valine from pyruvate: step 3/4. Functionally, functions in the biosynthesis of branched-chain amino acids. Catalyzes the dehydration of (2R,3R)-2,3-dihydroxy-3-methylpentanoate (2,3-dihydroxy-3-methylvalerate) into 2-oxo-3-methylpentanoate (2-oxo-3-methylvalerate) and of (2R)-2,3-dihydroxy-3-methylbutanoate (2,3-dihydroxyisovalerate) into 2-oxo-3-methylbutanoate (2-oxoisovalerate), the penultimate precursor to L-isoleucine and L-valine, respectively. This Shewanella amazonensis (strain ATCC BAA-1098 / SB2B) protein is Dihydroxy-acid dehydratase.